We begin with the raw amino-acid sequence, 526 residues long: MCALPSPRAQRPPACTRTSKNSCALLASRYNGSCSNDFGRLLASNLKILRNIILKDDTEFVKVWSKTSKSLISYESGRIYFDNYRCCYSSLLPEPELLYELPRTPKTEKIEDALLCQCPLENVLPNASEQKSCLLTLTANNWLYLLSADTGETLQRVYLSSRFKFSRSLGWDSSQETFYVKSVQCKQTALERQAGVDNNILMRVAAFQVFPLQLVGMLEINKKVFGKTAVDVLLSQGVLAVSHSSKLVRLYSFEYIVNKFRTEELILGQQCELNNARGIVGDAPYGVPVNICIHECPPVLFEMTYFENGVQIGGHPWHYIYTPNHKRHRGTHHVCSITDGALAKNGVQDMKCDSLEVDWIFFHPDDSGRIIHAGPSTINILKIMAETGCDWKYEIITDFSITAARDSNASQVIVTSSGRTVKRRFQMLDDDPAQETFRMVKYEDELDLLAVVDITHAEDEGQARLRLHDNKTGALMKRVPLEEPWDVTYSHEVYFDRDTIIHTVQEKNNSFCCHVYKMKRPASDQP.

A run of 2 helical transmembrane segments spans residues 200–220 and 237–257; these read ILMR…MLEI and GVLA…EYIV.

The protein resides in the membrane. It is found in the nucleus. The protein localises to the nucleolus. Its pathway is protein modification; protein ubiquitination. May function as a substrate receptor for CUL4-DDB1 E3 ubiquitin-protein ligase complex. The polypeptide is DDB1- and CUL4-associated factor 17 (dcaf17) (Danio rerio (Zebrafish)).